A 170-amino-acid chain; its full sequence is ATP synthase subunit b (170 aa).

Residues 15 to 37 form a helical membrane-spanning segment; it reads FNLFETNILNWAVVVFGLYKFLP.

This sequence belongs to the ATPase B chain family. F-type ATPases have 2 components, F(1) - the catalytic core - and F(0) - the membrane proton channel. F(1) has five subunits: alpha(3), beta(3), gamma(1), delta(1), epsilon(1). F(0) has four main subunits: a(1), b(1), b'(1) and c(10-14). The alpha and beta chains form an alternating ring which encloses part of the gamma chain. F(1) is attached to F(0) by a central stalk formed by the gamma and epsilon chains, while a peripheral stalk is formed by the delta, b and b' chains.

Its subcellular location is the cellular thylakoid membrane. In terms of biological role, f(1)F(0) ATP synthase produces ATP from ADP in the presence of a proton or sodium gradient. F-type ATPases consist of two structural domains, F(1) containing the extramembraneous catalytic core and F(0) containing the membrane proton channel, linked together by a central stalk and a peripheral stalk. During catalysis, ATP synthesis in the catalytic domain of F(1) is coupled via a rotary mechanism of the central stalk subunits to proton translocation. Functionally, component of the F(0) channel, it forms part of the peripheral stalk, linking F(1) to F(0). This Prochlorococcus marinus (strain MIT 9312) protein is ATP synthase subunit b.